Here is a 1583-residue protein sequence, read N- to C-terminus: Transcriptional activator GLI3 (1583 aa).

Met-1 carries the post-translational modification N-acetylmethionine. Polar residues-rich tracts occupy residues 1-10 and 58-78; these read MEAQAHSSTA and ITMQ…PSTS. The tract at residues 1 to 78 is disordered; it reads MEAQAHSSTA…NKISEEPSTS (78 aa). At Arg-175 the chain carries Omega-N-methylarginine. A disordered region spans residues 368–475; sequence QSLGSAFGHS…DKDESKQEPE (108 aa). Low complexity predominate over residues 403–421; the sequence is VQVSSGPSESSQSKPTSES. Residue Lys-438 forms a Glycyl lysine isopeptide (Lys-Gly) (interchain with G-Cter in SUMO2) linkage. The segment covering 448–457 has biased composition (polar residues); it reads SRGQQEQPEG. Over residues 461-474 the composition is skewed to basic and acidic residues; the sequence is VKEEADKDESKQEP. A Glycyl lysine isopeptide (Lys-Gly) (interchain with G-Cter in SUMO2) cross-link involves residue Lys-462. 5 C2H2-type zinc fingers span residues 480–505, 513–540, 546–570, 576–601, and 607–632; these read TNCH…NNDH, FVCR…MRRH, HKCT…LRSH, YVCE…NRTH, and YVCK…KTVH. A disordered region spans residues 620–728; that stretch reads DPSSLRKHVK…PISNYSNSGL (109 aa). The segment covering 632 to 648 has biased composition (basic and acidic residues); that stretch reads HGPEAHVTKKQRGDMHP. At Ser-664 the chain carries Phosphoserine. Basic and acidic residues predominate over residues 684–699; the sequence is SKREECLQVKTVKAEK. Low complexity predominate over residues 703–726; sequence SQPSPGGQSSCSSQQSPISNYSNS. A mediates interaction with DZIP1 region spans residues 745–845; the sequence is DETPIMDSTI…VDFTVLNTLN (101 aa). Lys-773 participates in a covalent cross-link: Glycyl lysine isopeptide (Lys-Gly) (interchain with G-Cter in ubiquitin). Lys-779 participates in a covalent cross-link: Glycyl lysine isopeptide (Lys-Gly) (interchain with G-Cter in SUMO2); alternate. Residue Lys-779 forms a Glycyl lysine isopeptide (Lys-Gly) (interchain with G-Cter in ubiquitin); alternate linkage. Residues Lys-784 and Lys-800 each participate in a glycyl lysine isopeptide (Lys-Gly) (interchain with G-Cter in ubiquitin) cross-link. Residues 809–828 form a disordered region; that stretch reads GNGTQSNNNYSSGGPGTLLP. Positions 810 to 820 are enriched in polar residues; sequence NGTQSNNNYSS. Phosphoserine; by PKA occurs at positions 849, 865, 877, 907, 980, and 1006. The segment covering 863–880 has biased composition (low complexity); sequence RSSGISPCFSSRRSSEAS. Positions 863–918 are disordered; sequence RSSGISPCFSSRRSSEASQAEGRPQNVSVADSYDPISTDASRRSSEASQGDGLPSL. Positions 1164–1189 are disordered; sequence EVSSGTSDLSSSKLKCGQQRPSAQQP. Residues 1166–1175 show a composition bias toward low complexity; the sequence is SSGTSDLSSS.

The protein belongs to the GLI C2H2-type zinc-finger protein family. In terms of assembly, the phosphorylated form interacts with BTRC. The full-length GLI3 form (GLI3FL) interacts with SUFU and this interaction regulates the formation of either repressor or activator forms of GLI3. Its association with SUFU is regulated by Hh signaling and dissociation of the SUFU-GLI3 interaction requires the presence of the ciliary motor KIF3A. Interacts with KIF7. The activator form of GLI3 (GLI3A) but not the repressor form (GLI3R) can interact with TRPS1. Interacts with ZIC1. Interacts with ZIC3 (via C2H2-type domains 3, 4 and 5); the interaction enhances its transcriptional activity. Interacts with WRD11; the interaction associates EMX1 with GLI3. Interacts with DZIP1; retains GLI3 within the cytoplasm. Post-translationally, phosphorylated by DYRK2 (in vitro). Phosphorylated on multiple sites by protein kinase A (PKA) and phosphorylation by PKA primes further phosphorylation by CK1 and GSK3. Phosphorylation is essential for its proteolytic processing. Transcriptional repressor GLI3R, a C-terminally truncated form, is generated from the full-length GLI3 protein (GLI3FL/GLI3-190) through proteolytic processing. This process requires PKA-primed phosphorylation of GLI3, ubiquitination of GLI3 and the presence of BTRC. GLI3FL is complexed with SUFU in the cytoplasm and is maintained in a neutral state. Without the Hh signal, the SUFU-GLI3 complex is recruited to cilia, leading to the efficient processing of GLI3FL into GLI3R. GLI3R formation leads to its dissociation from SUFU, allowing it to translocate into the nucleus, and repress Hh target genes. When Hh signaling is initiated, SUFU dissociates from GLI3FL and this has two consequences. First, GLI3R production is halted. Second, free GLI3FL translocates to the nucleus, where it is phosphorylated, destabilized, and converted to a transcriptional activator (GLI3A). Phosphorylated in vitro by ULK3.

The protein resides in the nucleus. Its subcellular location is the cytoplasm. The protein localises to the cell projection. It is found in the cilium. In terms of biological role, has a dual function as a transcriptional activator and a repressor of the sonic hedgehog (Shh) pathway, and plays a role in limb development. The full-length GLI3 form (GLI3FL) after phosphorylation and nuclear translocation, acts as an activator (GLI3A) while GLI3R, its C-terminally truncated form, acts as a repressor. A proper balance between the GLI3 activator and the repressor GLI3R, rather than the repressor gradient itself or the activator/repressor ratio gradient, specifies limb digit number and identity. In concert with TRPS1, plays a role in regulating the size of the zone of distal chondrocytes, in restricting the zone of PTHLH expression in distal cells and in activating chondrocyte proliferation. Binds to the minimal GLI-consensus sequence 5'-GGGTGGTC-3'. This Mus musculus (Mouse) protein is Transcriptional activator GLI3 (Gli3).